The primary structure comprises 1038 residues: Probable ubiquitin conjugation factor E4 (1038 aa).

Disordered regions lie at residues 430-459 and 1010-1038; these read ANDAGRENGNESRLLQSKEATSSSSNASGQ and SHQSKKRTSGEDSSNKERIQTTNSDMLID. Residues 446–459 are compositionally biased toward low complexity; the sequence is SKEATSSSSNASGQ. The 75-residue stretch at 940–1014 folds into the U-box domain; it reads EIPDEFLDPI…DEFVKSHQSK (75 aa). Residues 1017 to 1028 are compositionally biased toward basic and acidic residues; it reads TSGEDSSNKERI. A compositionally biased stretch (polar residues) spans 1029-1038; the sequence is QTTNSDMLID.

It belongs to the ubiquitin conjugation factor E4 family.

The protein localises to the cytoplasm. The protein resides in the nucleus. The enzyme catalyses S-ubiquitinyl-[E2 ubiquitin-conjugating enzyme]-L-cysteine + [acceptor protein]-L-lysine = [E2 ubiquitin-conjugating enzyme]-L-cysteine + N(6)-ubiquitinyl-[acceptor protein]-L-lysine.. It functions in the pathway protein modification; protein ubiquitination. Functionally, ubiquitin-protein ligase that may function as an E3 ligase in conjunction with specific E1 and E2 ligases. May also function as an E4 ligase mediating the assembly of polyubiquitin chain assembly on substrates monoubiquitinated by another E3 ubiquitin ligase. In Arabidopsis thaliana (Mouse-ear cress), this protein is Probable ubiquitin conjugation factor E4 (PUB1).